A 180-amino-acid polypeptide reads, in one-letter code: Endothelin-2 (180 aa).

The first 26 residues, 1 to 26 (MVALPTAWCSVALALLVALHEGKSQS), serve as a signal peptide directing secretion. A propeptide spanning residues 27 to 47 (AATSEEPPAPSARARGSHLRL) is cleaved from the precursor. 2 cysteine pairs are disulfide-bonded: C50/C64 and C52/C60. A propeptide spanning residues 71 to 180 (VNTPGQTAPY…ESSHSRWRKR (110 aa)) is cleaved from the precursor. Positions 97 to 112 (CECYSTRDSACVTFCH) are endothelin-like. Residues 157–180 (NFTRHQQQKATREPESSHSRWRKR) are disordered.

It belongs to the endothelin/sarafotoxin family.

The protein resides in the secreted. Its function is as follows. Endothelins are endothelium-derived vasoconstrictor peptides. The protein is Endothelin-2 (EDN2) of Atelerix albiventris (Middle-African hedgehog).